A 154-amino-acid chain; its full sequence is ATP synthase subunit b (154 aa).

A helical transmembrane segment spans residues 5–27; sequence LLGQAIAFTLFVWFCMKYVWPPI.

Belongs to the ATPase B chain family. F-type ATPases have 2 components, F(1) - the catalytic core - and F(0) - the membrane proton channel. F(1) has five subunits: alpha(3), beta(3), gamma(1), delta(1), epsilon(1). F(0) has three main subunits: a(1), b(2) and c(10-14). The alpha and beta chains form an alternating ring which encloses part of the gamma chain. F(1) is attached to F(0) by a central stalk formed by the gamma and epsilon chains, while a peripheral stalk is formed by the delta and b chains.

It localises to the cell inner membrane. Functionally, f(1)F(0) ATP synthase produces ATP from ADP in the presence of a proton or sodium gradient. F-type ATPases consist of two structural domains, F(1) containing the extramembraneous catalytic core and F(0) containing the membrane proton channel, linked together by a central stalk and a peripheral stalk. During catalysis, ATP synthesis in the catalytic domain of F(1) is coupled via a rotary mechanism of the central stalk subunits to proton translocation. Component of the F(0) channel, it forms part of the peripheral stalk, linking F(1) to F(0). The protein is ATP synthase subunit b of Aliivibrio fischeri (strain ATCC 700601 / ES114) (Vibrio fischeri).